The sequence spans 324 residues: Elongation factor P--(R)-beta-lysine ligase (324 aa).

75 to 77 (SPE) contacts substrate. ATP is bound by residues 99-101 (RNK) and Asn108. A substrate-binding site is contributed by Tyr117. 243–244 (EL) provides a ligand contact to ATP. Glu250 lines the substrate pocket. Gly299 contacts ATP.

Belongs to the class-II aminoacyl-tRNA synthetase family. EpmA subfamily. Homodimer.

The enzyme catalyses D-beta-lysine + L-lysyl-[protein] + ATP = N(6)-((3R)-3,6-diaminohexanoyl)-L-lysyl-[protein] + AMP + diphosphate + H(+). Functionally, with EpmB is involved in the beta-lysylation step of the post-translational modification of translation elongation factor P (EF-P). Catalyzes the ATP-dependent activation of (R)-beta-lysine produced by EpmB, forming a lysyl-adenylate, from which the beta-lysyl moiety is then transferred to the epsilon-amino group of a conserved specific lysine residue in EF-P. The chain is Elongation factor P--(R)-beta-lysine ligase from Buchnera aphidicola subsp. Acyrthosiphon pisum (strain 5A).